Consider the following 426-residue polypeptide: MIGCAKPLAAPLQAWARPPSPAGRRLPPSFCAPDTSPALTRAVESPGQSQSDDAPPPRSGEAASSLAPRASSHLDRWSRSRALRSGHRPALNRAALSSASVSAPPVIKSPRPEDAAVAAEDGEDDDVCEAERDAAAGKAIYIVSDGTGWTAEHSVNAALGQFENCLADRGCAVNTHLFSLIDDMDRLIEVIKQAAKEGALVLYTLADPSMAEATKKACDFWGVPCTDVLRPTVEAIASHIGVAPSGIPRSFPSRNGRLSEDYFQRIDAIDFTIKQDDGVLPQNFYRADIVLAGVSRTGKTPLSIYLAQKGYKVANVPIVMGVALPKSLFEINQDKVFGLTINPAILQGIRKTRAKTLGFDGRQSNYAEMDHVRQELVHANQIFVQNPWWPVIAVTGKAIEETAAVILGILHDRKQKCSMPRISKRY.

The transit peptide at 1-41 (MIGCAKPLAAPLQAWARPPSPAGRRLPPSFCAPDTSPALTR) directs the protein to the chloroplast. 2 disordered regions span residues 1-76 (MIGC…HLDR) and 94-124 (AALS…DGED). Low complexity predominate over residues 94–119 (AALSSASVSAPPVIKSPRPEDAAVAA). ADP is bound at residue 153–160 (HSVNAALG).

This sequence belongs to the pyruvate, phosphate/water dikinase regulatory protein family. PDRP subfamily. In terms of assembly, homodimer at pH 7.5 and homotetramer at pH 8.3. Mg(2+) is required as a cofactor. In terms of tissue distribution, leaf mesophyll-cells.

It localises to the plastid. The protein localises to the chloroplast stroma. It catalyses the reaction N(tele)-phospho-L-histidyl/L-threonyl-[pyruvate, phosphate dikinase] + ADP = N(tele)-phospho-L-histidyl/O-phospho-L-threonyl-[pyruvate, phosphate dikinase] + AMP + H(+). The enzyme catalyses N(tele)-phospho-L-histidyl/O-phospho-L-threonyl-[pyruvate, phosphate dikinase] + phosphate + H(+) = N(tele)-phospho-L-histidyl/L-threonyl-[pyruvate, phosphate dikinase] + diphosphate. The protein operates within photosynthesis; C4 acid pathway. Its activity is regulated as follows. Regulated by light/dark exposure. Its function is as follows. Bifunctional serine/threonine kinase and phosphorylase involved in the dark/light-mediated regulation of PPDK by catalyzing its phosphorylation/dephosphorylation. Dark/light-induced changes in stromal concentrations of the competing ADP and Pi substrates govern the direction of the reaction. In the dark, phosphorylates the catalytic intermediate of PPDK (PPDK-HisP), inactivating it. Light exposure induces the phosphorolysis reaction that reactivates PPDK. Phosphorylates PPDK at both Ser-528 and Thr-527. Can use ADP as a high specificity substrate and GDP as a lower affinity substrate, but has no activity with UDP. This Zea mays (Maize) protein is Pyruvate, phosphate dikinase regulatory protein, chloroplastic (PDRP1).